A 152-amino-acid chain; its full sequence is Transcriptional regulator MraZ (152 aa).

SpoVT-AbrB domains are found at residues 5 to 52 and 81 to 124; these read ATLV…PLPE and ASEC…DEQT.

The protein belongs to the MraZ family. In terms of assembly, forms oligomers.

It localises to the cytoplasm. It is found in the nucleoid. In terms of biological role, negatively regulates its own expression and that of the subsequent genes in the proximal part of the division and cell wall (dcw) gene cluster. Acts by binding directly to DNA. May also regulate the expression of genes outside the dcw cluster. This Pectobacterium atrosepticum (strain SCRI 1043 / ATCC BAA-672) (Erwinia carotovora subsp. atroseptica) protein is Transcriptional regulator MraZ.